The primary structure comprises 396 residues: 8-amino-7-oxononanoate synthase (396 aa).

Arg-19 lines the substrate pocket. 106 to 107 (GY) is a pyridoxal 5'-phosphate binding site. Residue His-131 participates in substrate binding. Pyridoxal 5'-phosphate-binding residues include Ser-176, His-204, and Thr-233. At Lys-236 the chain carries N6-(pyridoxal phosphate)lysine. Thr-350 is a substrate binding site.

It belongs to the class-II pyridoxal-phosphate-dependent aminotransferase family. BioF subfamily. In terms of assembly, homodimer. Requires pyridoxal 5'-phosphate as cofactor.

It carries out the reaction 6-carboxyhexanoyl-[ACP] + L-alanine + H(+) = (8S)-8-amino-7-oxononanoate + holo-[ACP] + CO2. It participates in cofactor biosynthesis; biotin biosynthesis. In terms of biological role, catalyzes the decarboxylative condensation of pimeloyl-[acyl-carrier protein] and L-alanine to produce 8-amino-7-oxononanoate (AON), [acyl-carrier protein], and carbon dioxide. In Pseudomonas syringae pv. syringae (strain B728a), this protein is 8-amino-7-oxononanoate synthase.